We begin with the raw amino-acid sequence, 146 residues long: UPF0178 protein Helmi_09130 (146 aa).

This sequence belongs to the UPF0178 family.

The protein is UPF0178 protein Helmi_09130 of Heliobacterium modesticaldum (strain ATCC 51547 / Ice1).